The following is a 309-amino-acid chain: Aspartate carbamoyltransferase catalytic subunit (309 aa).

The carbamoyl phosphate site is built by R58 and T59. An L-aspartate-binding site is contributed by K86. R108, H136, and Q139 together coordinate carbamoyl phosphate. L-aspartate contacts are provided by R170 and R224. Carbamoyl phosphate-binding residues include G266 and P267.

The protein belongs to the aspartate/ornithine carbamoyltransferase superfamily. ATCase family. In terms of assembly, heterododecamer (2C3:3R2) of six catalytic PyrB chains organized as two trimers (C3), and six regulatory PyrI chains organized as three dimers (R2).

The enzyme catalyses carbamoyl phosphate + L-aspartate = N-carbamoyl-L-aspartate + phosphate + H(+). The protein operates within pyrimidine metabolism; UMP biosynthesis via de novo pathway; (S)-dihydroorotate from bicarbonate: step 2/3. Catalyzes the condensation of carbamoyl phosphate and aspartate to form carbamoyl aspartate and inorganic phosphate, the committed step in the de novo pyrimidine nucleotide biosynthesis pathway. The polypeptide is Aspartate carbamoyltransferase catalytic subunit (Campylobacter concisus (strain 13826)).